Consider the following 201-residue polypeptide: Reticulon-like protein B10 (201 aa).

The Reticulon domain occupies 14-201 (VADLIMWKNR…KPTNKIKKMQ (188 aa)). Transmembrane regions (helical) follow at residues 25–45 (GGFL…KCGY), 46–66 (SFFP…FLWA), and 135–155 (FLNF…IPFL).

The protein localises to the endoplasmic reticulum membrane. This is Reticulon-like protein B10 (RTNLB10) from Arabidopsis thaliana (Mouse-ear cress).